A 98-amino-acid chain; its full sequence is Peptides MS9.1 (98 aa).

The first 21 residues, 1–21 (MKQSLILAVLCLALVFATIEA), serve as a signal peptide directing secretion. Positions 22–27 (KPKADP) are excised as a propeptide. Intrachain disulfides connect Cys-34-Cys-46 and Cys-37-Cys-52. 2 consecutive propeptides follow at residues 63–64 (DP) and 92–98 (DPVRDAE).

It belongs to the sea anemone BBH family.

The protein resides in the secreted. It localises to the nematocyst. Its function is as follows. Acts as a positive modulator of mammalian TRPA1, a non-selective cation channel involved in detection of pain, in vitro yet has an analgesic and anti-inflammatory effect in vivo. In Metridium senile (Brown sea anemone), this protein is Peptides MS9.1.